The sequence spans 163 residues: Acetolactate synthase isozyme 3 small subunit (163 aa).

Residues 4-78 enclose the ACT domain; it reads ILSVLLENES…DVLRVSELGQ (75 aa).

It belongs to the acetolactate synthase small subunit family. Dimer of large and small chains.

The enzyme catalyses 2 pyruvate + H(+) = (2S)-2-acetolactate + CO2. The protein operates within amino-acid biosynthesis; L-isoleucine biosynthesis; L-isoleucine from 2-oxobutanoate: step 1/4. Its pathway is amino-acid biosynthesis; L-valine biosynthesis; L-valine from pyruvate: step 1/4. Sensitive to valine inhibition. This is Acetolactate synthase isozyme 3 small subunit (ilvH) from Salmonella typhimurium (strain LT2 / SGSC1412 / ATCC 700720).